The chain runs to 104 residues: Putative protein 22K (104 aa).

Positions 35–104 (YKQLEKELGE…KAPAAKAPSK (70 aa)) are disordered. Positions 60–78 (PLSEGELEEISEEEEEEGE) are enriched in acidic residues. The span at 94-104 (SKAPAAKAPSK) shows a compositional bias: low complexity.

The protein is Putative protein 22K of Snake adenovirus serotype 1 (SnAdV-1).